Consider the following 363-residue polypeptide: Chorismate synthase (363 aa).

The tract at residues 44 to 63 (DLDRRKPGTSRHTTQRQEPD) is disordered. 2 residues coordinate NADP(+): R48 and R54. FMN is bound by residues 125–127 (RSS), 237–238 (NA), G277, 292–296 (KPTSS), and R318.

The protein belongs to the chorismate synthase family. As to quaternary structure, homotetramer. FMNH2 is required as a cofactor.

The catalysed reaction is 5-O-(1-carboxyvinyl)-3-phosphoshikimate = chorismate + phosphate. It participates in metabolic intermediate biosynthesis; chorismate biosynthesis; chorismate from D-erythrose 4-phosphate and phosphoenolpyruvate: step 7/7. In terms of biological role, catalyzes the anti-1,4-elimination of the C-3 phosphate and the C-6 proR hydrogen from 5-enolpyruvylshikimate-3-phosphate (EPSP) to yield chorismate, which is the branch point compound that serves as the starting substrate for the three terminal pathways of aromatic amino acid biosynthesis. This reaction introduces a second double bond into the aromatic ring system. The chain is Chorismate synthase from Pseudomonas fluorescens (strain ATCC BAA-477 / NRRL B-23932 / Pf-5).